Reading from the N-terminus, the 193-residue chain is MLVTLTPELLLQAYTQGFFPMAEGQGQRIYWYEPDPRAVFELDKVHFSKRLLRVIRQERFEIRYSTAFERVIRACADRPSTWISEEIIRTYIRLYRTGYGQSVESWLDGELVGGLYGVSLGGAFFGESMFCRVSDASKVAFFHLVERLRGRGFALLDTQFANEHLVQFHVVEIPRREYRQRLKGALALPCKFR.

Belongs to the L/F-transferase family.

The protein resides in the cytoplasm. It catalyses the reaction N-terminal L-lysyl-[protein] + L-leucyl-tRNA(Leu) = N-terminal L-leucyl-L-lysyl-[protein] + tRNA(Leu) + H(+). The catalysed reaction is N-terminal L-arginyl-[protein] + L-leucyl-tRNA(Leu) = N-terminal L-leucyl-L-arginyl-[protein] + tRNA(Leu) + H(+). It carries out the reaction L-phenylalanyl-tRNA(Phe) + an N-terminal L-alpha-aminoacyl-[protein] = an N-terminal L-phenylalanyl-L-alpha-aminoacyl-[protein] + tRNA(Phe). Its function is as follows. Functions in the N-end rule pathway of protein degradation where it conjugates Leu, Phe and, less efficiently, Met from aminoacyl-tRNAs to the N-termini of proteins containing an N-terminal arginine or lysine. The polypeptide is Leucyl/phenylalanyl-tRNA--protein transferase (Gloeobacter violaceus (strain ATCC 29082 / PCC 7421)).